Consider the following 250-residue polypeptide: Protein BTG4 (250 aa).

Belongs to the BTG family. In terms of assembly, interacts with CNOT7 and EIF4E. Interacts with CNOT8. As to expression, expressed in oocytes. Expressed in testis and in olfactory epithelium.

Functionally, adapter protein that bridges CNOT7, a catalytic subunit of the CCR4-NOT complex, to EIF4E, and facilitates maternal mRNAs decay during the maturation of oocytes and in the fertilized egg. It is therefore required for the maternal-zygotic transition (MZT), zygotic cleavage and initiation of embryonic development. This is Protein BTG4 (Btg4) from Mus musculus (Mouse).